We begin with the raw amino-acid sequence, 128 residues long: Large ribosomal subunit protein uL22 (128 aa).

Belongs to the universal ribosomal protein uL22 family. Part of the 50S ribosomal subunit.

In terms of biological role, this protein binds specifically to 23S rRNA; its binding is stimulated by other ribosomal proteins, e.g. L4, L17, and L20. It is important during the early stages of 50S assembly. It makes multiple contacts with different domains of the 23S rRNA in the assembled 50S subunit and ribosome. Its function is as follows. The globular domain of the protein is located near the polypeptide exit tunnel on the outside of the subunit, while an extended beta-hairpin is found that lines the wall of the exit tunnel in the center of the 70S ribosome. This Prochlorococcus marinus (strain MIT 9301) protein is Large ribosomal subunit protein uL22.